Reading from the N-terminus, the 71-residue chain is Potassium voltage-gated channel subfamily E member 2 (71 aa).

A helical transmembrane segment spans residues 7–27 (VILYLMVMIGMFSFIIVAILV). The Cytoplasmic segment spans residues 28-71 (STVKSKRREHSNDPYHQYIVEDWQEKYKSQILHFEEAKATIHEN).

Belongs to the potassium channel KCNE family. Interacts with KCNB1. Associates with KCNH2/ERG1. May associate with KCNQ2 and KCNQ3. Associates with HCN1 and probably HCN2. Heteromultimer with KCNC2. Interacts with KCNC2. Interacts with KCNQ1; forms a heterooligomer complex that targets to the membrane raft and leading to currents with an apparently instantaneous activation, a rapid deactivation process and a linear current-voltage relationship and decreases the amplitude of the outward current. As to expression, detected in heart; expression is highest in the SA node and the right atrium, and barely detectable in the ventricle.

It is found in the cell membrane. Its subcellular location is the apical cell membrane. Ancillary protein that functions as a regulatory subunit of the voltage-gated potassium (Kv) channel complex composed of pore-forming and potassium-conducting alpha subunits and of regulatory beta subunits. KCNE2 beta subunit modulates the gating kinetics and enhances stability of the channel complex. Alters the gating of the delayed rectifier Kv channel containing KCNB1 alpha subunit. Associates with KCNH2/HERG alpha subunit Kv channel to form the rapidly activating component of the delayed rectifying potassium current (IKr) in heart. May associate with KCNQ2 and/or KCNQ3 alpha subunits to modulate the native M-type current. May associate with HCN1 and HCN2 channel subunits to increase potassium current. Forms a heterooligomer complex with KCNQ1/KVLQT1 alpha subunits which leads to currents with an apparently instantaneous activation, a rapid deactivation process and a linear current-voltage relationship and decreases the amplitude of the outward current. KCNQ1-KCNE2 channel associates with Na(+)-coupled myo-inositol symporter in the apical membrane of choroid plexus epithelium and regulates the myo-inositol gradient between blood and cerebrospinal fluid with an impact on neuron excitability. The chain is Potassium voltage-gated channel subfamily E member 2 (KCNE2) from Oryctolagus cuniculus (Rabbit).